The following is a 514-amino-acid chain: Probable cysteine protease ATG4 (514 aa).

Basic and acidic residues predominate over residues 1-15 (MAREDASVPRSHDSA). Disordered stretches follow at residues 1-28 (MARE…EIPV) and 61-84 (DSSD…DSAQ). Residue C166 is the Nucleophile of the active site. Active-site residues include D336 and H338. The disordered stretch occupies residues 461–514 (ATPSAEDTVPVSTLSASESEITTSSYETPTSKDDNSSRASLDVVVLDTTGEQQE). Positions 472–489 (STLSASESEITTSSYETP) are enriched in low complexity.

It belongs to the peptidase C54 family.

It is found in the cytoplasm. It localises to the nucleus. The protein resides in the preautophagosomal structure. It catalyses the reaction [protein]-C-terminal L-amino acid-glycyl-phosphatidylethanolamide + H2O = [protein]-C-terminal L-amino acid-glycine + a 1,2-diacyl-sn-glycero-3-phosphoethanolamine. Its function is as follows. Cysteine protease that plays a key role in cytoplasm to vacuole transport (Cvt) and autophagy by mediating both proteolytic activation and delipidation of ATG8. Required for selective autophagic degradation of the nucleus (nucleophagy) as well as for mitophagy which contributes to regulate mitochondrial quantity and quality by eliminating the mitochondria to a basal level to fulfill cellular energy requirements and preventing excess ROS production. The protease activity is required for proteolytic activation of ATG8: cleaves the C-terminal amino acid of ATG8 to reveal a C-terminal glycine. ATG8 ubiquitin-like activity requires the exposure of the glycine at the C-terminus for its conjugation to phosphatidylethanolamine (PE) and its insertion to membranes, which is necessary for autophagy. The ATG8-PE conjugate mediates tethering between adjacent membranes and stimulates membrane hemifusion, leading to expansion of the autophagosomal membrane during autophagy. In addition to the protease activity, also catalyzes deconjugation of PE-conjugated forms of ATG8 during macroautophagy: ATG8 delipidation is required to release the protein from membranes, which facilitates multiple events during macroautophagy, and especially for efficient autophagosome biogenesis, the assembly of ATG9-containing tubulovesicular clusters into phagophores/autophagosomes, and for the disassembly of PAS-associated ATG components. ATG8 delipidation by ATG4 also recycles ATG8-PE generated on inappropriate membranes to maintain a reservoir of unlipidated ATG8 that is required for autophagosome formation at the PAS. This chain is Probable cysteine protease ATG4 (ATG4), found in Scheffersomyces stipitis (strain ATCC 58785 / CBS 6054 / NBRC 10063 / NRRL Y-11545) (Yeast).